We begin with the raw amino-acid sequence, 272 residues long: MKNTGKRIDLIANRKPQSQRVLYELRDRLKRNQFILNDTNPDIVISIGGDGMLLSAFHKYENQLDKVRFIGLHTGHLGFYTDYRDFELDKLVTNLQLDTGARVSYPVLNVKVFLENGEVKIFRALNEASIRRSDRTMVADIVINGVPFERFRGDGLTVSTPTGSTAYNKSLGGAVLHPTIEALQLTEIASLNNRVYRTLGSSIIVPKKDKIELIPTRNDYHTISVDNSVYSFRNIERIEYQIDHHKIHFVATPSHTSFWNRVKDAFIGEVDE.

The Proton acceptor role is filled by Asp50. NAD(+) is bound by residues 50–51 (DG), 126–127 (NE), Arg152, Asp154, 165–170 (TAYNKS), and Ala189.

This sequence belongs to the NAD kinase family. It depends on a divalent metal cation as a cofactor.

The protein resides in the cytoplasm. The catalysed reaction is NAD(+) + ATP = ADP + NADP(+) + H(+). Involved in the regulation of the intracellular balance of NAD and NADP, and is a key enzyme in the biosynthesis of NADP. Catalyzes specifically the phosphorylation on 2'-hydroxyl of the adenosine moiety of NAD to yield NADP. This is NAD kinase from Streptococcus pneumoniae (strain 70585).